The following is a 239-amino-acid chain: Prolyl hydroxylase EGLN3 (239 aa).

The tract at residues 62 to 73 is beta(2)beta(3) 'finger-like' loop; the sequence is AGPRAGVSKRHL. A required for interaction with ADRB2 region spans residues 88-104; that stretch reads CEAINFLLSLIDRLVLY. The Fe2OG dioxygenase domain maps to 116–214; the sequence is ERSKAMVACY…RYAMTVWYFD (99 aa). 3 residues coordinate Fe cation: His-135, Asp-137, and His-196. 2-oxoglutarate is bound at residue Arg-205.

As to quaternary structure, interacts with ADRB2; the interaction hydroxylates ADRB2 facilitating its ubiquitination by the VHL-E3 ligase complex. Interacts with PKM; the interaction hydroxylates PKM in hypoxia. Interacts with WDR83; the interaction leads to almost complete elimination of HIF-mediated reporter activity. Interacts with BCL2 (via its BH4 domain); the interaction disrupts the BAX-BCL4 complex inhibiting the anti-apoptotic activity of BCL2. Interacts with LIMD1, WTIP and AJUBA. Fe(2+) serves as cofactor. The cofactor is L-ascorbate. Ubiquitinated by SIAH1 and/or SIAH2 in response to the unfolded protein response (UPR), leading to its degradation. As to expression, highly expressed in cardiac and smooth muscle. Also high expression in brain, skeletal muscle and kidney. Low levels in lung.

The protein localises to the nucleus. The protein resides in the cytoplasm. The enzyme catalyses L-prolyl-[protein] + 2-oxoglutarate + O2 = trans-4-hydroxy-L-prolyl-[protein] + succinate + CO2. It carries out the reaction L-prolyl-[hypoxia-inducible factor alpha subunit] + 2-oxoglutarate + O2 = trans-4-hydroxy-L-prolyl-[hypoxia-inducible factor alpha subunit] + succinate + CO2. In terms of biological role, prolyl hydroxylase that mediates hydroxylation of proline residues in target proteins, such as PKM, TELO2, ATF4 and HIF1A. Target proteins are preferentially recognized via a LXXLAP motif. Cellular oxygen sensor that catalyzes, under normoxic conditions, the post-translational formation of 4-hydroxyproline in hypoxia-inducible factor (HIF) alpha proteins. Hydroxylates a specific proline found in each of the oxygen-dependent degradation (ODD) domains (N-terminal, NODD, and C-terminal, CODD) of HIF1A. Also hydroxylates HIF2A. Has a preference for the CODD site for both HIF1A and HIF2A. Hydroxylation on the NODD site by EGLN3 appears to require prior hydroxylation on the CODD site. Hydroxylated HIFs are then targeted for proteasomal degradation via the von Hippel-Lindau ubiquitination complex. Under hypoxic conditions, the hydroxylation reaction is attenuated allowing HIFs to escape degradation resulting in their translocation to the nucleus, heterodimerization with HIF1B, and increased expression of hypoxy-inducible genes. ELGN3 is the most important isozyme in limiting physiological activation of HIFs (particularly HIF2A) in hypoxia. Also hydroxylates PKM in hypoxia, limiting glycolysis. Under normoxia, hydroxylates and regulates the stability of ADRB2. Regulator of cardiomyocyte and neuronal apoptosis. In cardiomyocytes, inhibits the anti-apoptotic effect of BCL2 by disrupting the BAX-BCL2 complex. In neurons, has a NGF-induced proapoptotic effect, probably through regulating CASP3 activity. Also essential for hypoxic regulation of neutrophilic inflammation. Plays a crucial role in DNA damage response (DDR) by hydroxylating TELO2, promoting its interaction with ATR which is required for activation of the ATR/CHK1/p53 pathway. Also mediates hydroxylation of ATF4, leading to decreased protein stability of ATF4. The protein is Prolyl hydroxylase EGLN3 of Mus musculus (Mouse).